A 264-amino-acid polypeptide reads, in one-letter code: MVKPLPRLRLQGFNNLTKALSFNIYDVCYARTEEERQRYIEYIDEEYNADRLTQILTDVAEIIGANILNVARQDYDPQGASVTILISEEPVIDKKQAGKELISDAVVAHMDKSHITVHTYPETHPQEGIATFRADIDVATCGVISPLKALNYLIESLESDIVIMDYRVRGFTRDVKGKKHYIDHKINSIQNFLAKNIKSRYEMFDVNVYQENIFHTKMHLKDFDLDQYLFEEKAKNLSFKERMKIEALLKREIEELFHGRNLSE.

Residue serine 113 is the Schiff-base intermediate with substrate; via pyruvic acid of the active site. Serine 113 carries the post-translational modification Pyruvic acid (Ser); by autocatalysis. Histidine 118 functions as the Proton acceptor; for processing activity in the catalytic mechanism. Catalysis depends on cysteine 141, which acts as the Proton donor; for catalytic activity.

It belongs to the prokaryotic AdoMetDC family. Type 2 subfamily. As to quaternary structure, heterooctamer of four alpha and four beta chains arranged as a tetramer of alpha/beta heterodimers. Pyruvate is required as a cofactor. Is synthesized initially as an inactive proenzyme. Formation of the active enzyme involves a self-maturation process in which the active site pyruvoyl group is generated from an internal serine residue via an autocatalytic post-translational modification. Two non-identical subunits are generated from the proenzyme in this reaction, and the pyruvate is formed at the N-terminus of the alpha chain, which is derived from the carboxyl end of the proenzyme. The post-translation cleavage follows an unusual pathway, termed non-hydrolytic serinolysis, in which the side chain hydroxyl group of the serine supplies its oxygen atom to form the C-terminus of the beta chain, while the remainder of the serine residue undergoes an oxidative deamination to produce ammonia and the pyruvoyl group blocking the N-terminus of the alpha chain.

The catalysed reaction is S-adenosyl-L-methionine + H(+) = S-adenosyl 3-(methylsulfanyl)propylamine + CO2. Its pathway is amine and polyamine biosynthesis; S-adenosylmethioninamine biosynthesis; S-adenosylmethioninamine from S-adenosyl-L-methionine: step 1/1. Its function is as follows. Catalyzes the decarboxylation of S-adenosylmethionine to S-adenosylmethioninamine (dcAdoMet), the propylamine donor required for the synthesis of the polyamines spermine and spermidine from the diamine putrescine. The polypeptide is S-adenosylmethionine decarboxylase proenzyme (Stenotrophomonas maltophilia (strain R551-3)).